The sequence spans 266 residues: Glucosamine-6-phosphate deaminase (266 aa).

The active-site Proton acceptor; for enolization step is Asp72. The active-site For ring-opening step is the Asp141. Residue His143 is the Proton acceptor; for ring-opening step of the active site. Glu148 serves as the catalytic For ring-opening step.

Belongs to the glucosamine/galactosamine-6-phosphate isomerase family. NagB subfamily. As to quaternary structure, homohexamer.

The enzyme catalyses alpha-D-glucosamine 6-phosphate + H2O = beta-D-fructose 6-phosphate + NH4(+). The protein operates within amino-sugar metabolism; N-acetylneuraminate degradation; D-fructose 6-phosphate from N-acetylneuraminate: step 5/5. With respect to regulation, allosterically activated by N-acetylglucosamine 6-phosphate (GlcNAc6P). Its function is as follows. Catalyzes the reversible isomerization-deamination of glucosamine 6-phosphate (GlcN6P) to form fructose 6-phosphate (Fru6P) and ammonium ion. This is Glucosamine-6-phosphate deaminase from Tolumonas auensis (strain DSM 9187 / NBRC 110442 / TA 4).